We begin with the raw amino-acid sequence, 189 residues long: Peptide deformylase (189 aa).

2 residues coordinate Fe cation: cysteine 93 and histidine 135. The active site involves glutamate 136. Residue histidine 139 participates in Fe cation binding.

It belongs to the polypeptide deformylase family. The cofactor is Fe(2+).

The enzyme catalyses N-terminal N-formyl-L-methionyl-[peptide] + H2O = N-terminal L-methionyl-[peptide] + formate. Its function is as follows. Removes the formyl group from the N-terminal Met of newly synthesized proteins. Requires at least a dipeptide for an efficient rate of reaction. N-terminal L-methionine is a prerequisite for activity but the enzyme has broad specificity at other positions. This Karelsulcia muelleri (strain GWSS) (Sulcia muelleri) protein is Peptide deformylase.